The primary structure comprises 41 residues: Large ribosomal subunit protein bL36 (41 aa).

It belongs to the bacterial ribosomal protein bL36 family.

This chain is Large ribosomal subunit protein bL36, found in Rickettsia africae (strain ESF-5).